Here is a 469-residue protein sequence, read N- to C-terminus: DNA polymerase delta subunit 2 (469 aa).

At Met-1 the chain carries N-acetylmethionine. A Phosphoserine modification is found at Ser-257.

Belongs to the DNA polymerase delta/II small subunit family. Component of both the DNA polymerase delta and DNA polymerase zeta complexes. Component of the tetrameric DNA polymerase delta complex (Pol-delta4), which consists of POLD1/p125, POLD2/p50, POLD3/p66/p68 and POLD4/p12, with POLD1 bearing DNA polymerase and 3' to 5' proofreading exonuclease activities. Within Pol-delta4, directly interacts with POLD1, POLD3 and POLD4. Following stress caused by DNA damaging agents or by replication stress, POLD4 is degraded and Pol-delta4 is converted into a trimeric form of the complex (Pol-delta3), which consists of POLD1, POLD2 and POLD3. Pol-delta3 is the major form occurring at S phase replication sites, as well as DNA damage sites. Also observed as a dimeric complex with POLD2 (Pol-delta2 complex). Pol-delta2 is relatively insensitive to the PCNA stimulation (2-5-fold) compared to Pol-delta4 that is stimulated by over 50-fold. Contrary to the other components of Pol-delta4, does not directly interact with PCNA. As POLD1 and POLD4, directly interacts with WRNIP1; this interaction stimulates DNA polymerase delta-mediated DNA synthesis, independently of the presence of PCNA. This stimulation may be due predominantly to an increase of initiation frequency and also to increased processivity. Directly interacts with POLDIP2 and POLDIP3. Directly interacts with KCTD13/PDIP1; in the presence of PCNA, this interaction may stimulate DNA polymerase activity. Component of the tetrameric Pol-zeta complex (Pol-zeta4), which consists of REV3L, MAD2L2, POLD2 and POLD3, with REV3L bearing DNA polymerase catalytic activity. Interacts with KCTD10.

Its subcellular location is the nucleus. Accessory component of both the DNA polymerase delta complex and the DNA polymerase zeta complex. As a component of the trimeric and tetrameric DNA polymerase delta complexes (Pol-delta3 and Pol-delta4, respectively), plays a role in high fidelity genome replication, including in lagging strand synthesis, and repair. Pol-delta3 and Pol-delta4 are characterized by the absence or the presence of POLD4. They exhibit differences in catalytic activity. Most notably, Pol-delta3 shows higher proofreading activity than Pol-delta4. Although both Pol-delta3 and Pol-delta4 process Okazaki fragments in vitro, Pol-delta3 may also be better suited to fulfill this task, exhibiting near-absence of strand displacement activity compared to Pol-delta4 and stalling on encounter with the 5'-blocking oligonucleotides. Pol-delta3 idling process may avoid the formation of a gap, while maintaining a nick that can be readily ligated. Along with DNA polymerase kappa, DNA polymerase delta carries out approximately half of nucleotide excision repair (NER) synthesis following UV irradiation. Under conditions of DNA replication stress, required for the repair of broken replication forks through break-induced replication (BIR). Involved in the translesion synthesis (TLS) of templates carrying O6-methylguanine or abasic sites performed by Pol-delta4, independently of DNA polymerase zeta (REV3L) or eta (POLH). Facilitates abasic site bypass by DNA polymerase delta by promoting extension from the nucleotide inserted opposite the lesion. Also involved in TLS as a component of the DNA polymerase zeta complex. Along with POLD3, dramatically increases the efficiency and processivity of DNA synthesis of the DNA polymerase zeta complex compared to the minimal zeta complex, consisting of only REV3L and REV7. The chain is DNA polymerase delta subunit 2 (Pold2) from Mus musculus (Mouse).